A 1475-amino-acid polypeptide reads, in one-letter code: MESRPGSFQYVPVQLQGGAPWGFTLKGGLEHCEPLTVSKIEDGGKAALSQKMRTGDELVNINGTPLYGSRQEALILIKGSFRILKLIVRRRNTPVSRPHSWHVAKLLEGCPDVATTMHFPSEAFSLSWHSGCNTSDVSVQWCPLSRHCSTEKSSSIGSMESLEQPGQPTYEGHLLPIDQNMYPSQRDSAYSSFSASSNASDCALSLKPEEPPSTDCVMPGPGPIKVTDDQANVSENSGSSHSTSEDHVTSTSHASSYSDEGHHSGPAKMARGPPEPPVRSDSLPASRAQLLNGEQHRASEPVDSLPQKEKPGLETVLPPRSSNQFCCLSGQDQVTDEDHQNCELSKPSESSQDDCEHLLIEDSSKALDSPKAHDKGSNKEFGLLKEASADLANTLNFGAIPHLRGTMEHRHSAPEQLLASHLQQVHLDSRGSKGMELPIGQDGHQWTVSPLHNNPKGKKSPSLPTGGTQDQTRKERKTTPLDDKLMASVHQSQSDVLLGEVDGHPNRAGRASSDLTSQQPSATCSSVQQTRDFLSAHKIVDHTEASEEGDNEPKECGRLGGRRSGGPRGRSIQNRRRSERFATNLRNEIQRRKAQLQKSKGPLSQLCDTNEAVEETQEPPESPPLSASNASLLPSYKNVPSPGDKVFNKSMILRARSSECLSQASESSKARGGVEGRMSPGQRSGQSSLALNTWWKASDSSTLDTEKANAHHGVCRGHWRWSPEHNAQPQVALSTEAPSNPDDSKELKTSTPQAGEEAVLMPFADRRKFFEESSKSLSTSHLPGLTTHNNKPFIQRQKPIDQNFQSVSYRDLRCHPLDQSYHSADQSYHAADQSYHSLSPLQSETPTYPECFATKGRDNSLCCKPVHHGDCDYHRTCSHPCSAQGTVRHDPCICCSGEICPALLKRNLLPKCHNCRCHHHQCIRCTGCCHGPQHSAHEDSSMAPGNAWKSRKAAIQEFPVDKWKPITGNRKTSHSGREMAHSKAGFSLSTPFRPCIENPALDLSNYRAVSSLDILGDFKRASNKPEESSVYEDENSVASMPRPLRSRAFSESHISLEPQNTQAWGKHQRESFSKGSETQPDTLGARKKVFPPPRPPPPNWEKYRLFRAAQLQQQQQQQQQQQQQQRCEEEEEKEQEEEGEKEEDLPPQYFSSELTGSCAPNTEEQPQSLKMGHQEASRQGSQSLQEQEAFALHPSNFVPPVRGCTVPQPEKAQHPCYYGTHGLWRTTEQEATVTPKQEFQHFSPPKGASGIPTSYSAYYNISVAKAELLNKLKQQPEMAEAGLGEEGVDYELAQKKIQLIESISRKLSVLREAQRGLLDDINANAALGEEVEANLKAVCKSNEFEKYHLFIGDLDKVVNLLLSLSGRLARVENALNSIDSESNQEKLVLIEKKQQLTNQLADAKELKEHVDGREKLVFGMVSRYLPQDQLQDYQHFVKMKSALIIEQRELEEKIKLGEEQLKCLKESLHLGPSNF.

Residues 10-92 form the PDZ domain; the sequence is YVPVQLQGGA…ILKLIVRRRN (83 aa). 2 disordered regions span residues 151-175 and 202-321; these read EKSSSIGSMESLEQPGQPTYEGHLL and CALS…PPRS. Positions 249-258 are enriched in polar residues; it reads TSTSHASSYS. Residues 294–312 show a composition bias toward basic and acidic residues; the sequence is EQHRASEPVDSLPQKEKPG. Ser-412 bears the Phosphoserine mark. Disordered regions lie at residues 432–523, 542–577, 610–644, and 658–688; these read SKGM…PSAT, HTEASEEGDNEPKECGRLGGRRSGGPRGRSIQNRRR, NEAVEETQEPPESPPLSASNASLLPSYKNVPSPGD, and SECLSQASESSKARGGVEGRMSPGQRSGQSS. The span at 471 to 485 shows a compositional bias: basic and acidic residues; the sequence is QTRKERKTTPLDDKL. The span at 513–523 shows a compositional bias: polar residues; that stretch reads SDLTSQQPSAT. The span at 542 to 557 shows a compositional bias: basic and acidic residues; the sequence is HTEASEEGDNEPKECG. Over residues 558 to 568 the composition is skewed to gly residues; it reads RLGGRRSGGPR. 2 stretches are compositionally biased toward low complexity: residues 624–635 and 658–667; these read PLSASNASLLPS and SECLSQASES. Phosphoserine is present on Ser-722. Composition is skewed to polar residues over residues 727-738 and 775-791; these read AQPQVALSTEAP and KSLSTSHLPGLTTHNNK. 2 disordered regions span residues 727-753 and 772-791; these read AQPQVALSTEAPSNPDDSKELKTSTPQ and ESSKSLSTSHLPGLTTHNNK. Ser-1010 is subject to Phosphoserine. Disordered regions lie at residues 1022-1041 and 1055-1185; these read SNKPEESSVYEDENSVASMP and SLEP…QSLQ. The span at 1090–1099 shows a compositional bias: pro residues; it reads FPPPRPPPPN. A compositionally biased stretch (low complexity) spans 1110-1125; sequence QLQQQQQQQQQQQQQQ. Residues 1128–1145 show a composition bias toward acidic residues; it reads EEEEEKEQEEEGEKEEDL. Polar residues predominate over residues 1149-1168; it reads YFSSELTGSCAPNTEEQPQS. The ASD2 domain maps to 1190 to 1469; the sequence is FALHPSNFVP…QLKCLKESLH (280 aa). A coiled-coil region spans residues 1380–1470; it reads SESNQEKLVL…LKCLKESLHL (91 aa).

The protein belongs to the shroom family. As to quaternary structure, interacts directly with F-actin. As to expression, detected in most adult tissues examined. Expressed in brain, lung, heart, liver, kidney, muscle and ovary. Expressed throughout the brain, with high expression in the brain stem and cerebellum and weaker expression in the hypothalamus, the hippocampus and the olfactory bulb. Expressed in wide range of cell types during development, including vascular endothelium and the polarized epithelium of the neural tube and kidney.

The protein resides in the cytoplasm. The protein localises to the cytoskeleton. Functionally, probable regulator of cytoskeletal architecture that plays an important role in development. May regulate cellular and cytoskeletal architecture by modulating the spatial distribution of myosin II. The protein is Protein Shroom4 (Shroom4) of Mus musculus (Mouse).